The sequence spans 404 residues: Cysteine desulfurase IscS (404 aa).

Pyridoxal 5'-phosphate-binding positions include 75–76 (AT), asparagine 155, glutamine 183, and 203–205 (SAH). Residue lysine 206 is modified to N6-(pyridoxal phosphate)lysine. Pyridoxal 5'-phosphate is bound at residue threonine 243. Cysteine 328 (cysteine persulfide intermediate) is an active-site residue. Position 328 (cysteine 328) interacts with [2Fe-2S] cluster.

The protein belongs to the class-V pyridoxal-phosphate-dependent aminotransferase family. NifS/IscS subfamily. In terms of assembly, homodimer. Forms a heterotetramer with IscU, interacts with other sulfur acceptors. Requires pyridoxal 5'-phosphate as cofactor.

It localises to the cytoplasm. The enzyme catalyses (sulfur carrier)-H + L-cysteine = (sulfur carrier)-SH + L-alanine. The protein operates within cofactor biosynthesis; iron-sulfur cluster biosynthesis. In terms of biological role, master enzyme that delivers sulfur to a number of partners involved in Fe-S cluster assembly, tRNA modification or cofactor biosynthesis. Catalyzes the removal of elemental sulfur atoms from cysteine to produce alanine. Functions as a sulfur delivery protein for Fe-S cluster synthesis onto IscU, an Fe-S scaffold assembly protein, as well as other S acceptor proteins. This chain is Cysteine desulfurase IscS, found in Aeromonas hydrophila subsp. hydrophila (strain ATCC 7966 / DSM 30187 / BCRC 13018 / CCUG 14551 / JCM 1027 / KCTC 2358 / NCIMB 9240 / NCTC 8049).